The following is a 152-amino-acid chain: Ribonuclease pancreatic gamma-type (152 aa).

Positions 1 to 25 (MGLEKSFILFSLLVLVLGCVQPSLV) are cleaved as a signal peptide. Positions 26–48 (GESKESPSEKFKRRHMDEEGPYQ) are disordered. A compositionally biased stretch (basic and acidic residues) spans 27–43 (ESKESPSEKFKRRHMDE). Lys35 and Arg38 together coordinate substrate. His40 acts as the Proton acceptor in catalysis. Disulfide bonds link Cys54-Cys112, Cys68-Cys123, Cys86-Cys138, and Cys93-Cys100. Substrate is bound by residues 69-73 (KPLNT) and Lys94. His147 acts as the Proton donor in catalysis.

Belongs to the pancreatic ribonuclease family. As to quaternary structure, monomer.

The protein resides in the secreted. It carries out the reaction an [RNA] containing cytidine + H2O = an [RNA]-3'-cytidine-3'-phosphate + a 5'-hydroxy-ribonucleotide-3'-[RNA].. The catalysed reaction is an [RNA] containing uridine + H2O = an [RNA]-3'-uridine-3'-phosphate + a 5'-hydroxy-ribonucleotide-3'-[RNA].. Functionally, endonuclease that catalyzes the cleavage of RNA on the 3' side of pyrimidine nucleotides. Acts on single-stranded and double-stranded RNA. This is Ribonuclease pancreatic gamma-type from Rattus fuscipes (Bush rat).